A 388-amino-acid chain; its full sequence is Ribosomal RNA large subunit methyltransferase F (388 aa).

Residues 1 to 22 are compositionally biased toward polar residues; that stretch reads MKTNNHNAKQAQTKTAKSNPSK. Residues 1 to 51 are disordered; the sequence is MKTNNHNAKQAQTKTAKSNPSKEVTKIKPKRVKNKPTAKAAKSTGLKTNAA. A compositionally biased stretch (basic residues) spans 27–36; it reads IKPKRVKNKP.

It belongs to the methyltransferase superfamily. METTL16/RlmF family.

The protein localises to the cytoplasm. It carries out the reaction adenosine(1618) in 23S rRNA + S-adenosyl-L-methionine = N(6)-methyladenosine(1618) in 23S rRNA + S-adenosyl-L-homocysteine + H(+). Its function is as follows. Specifically methylates the adenine in position 1618 of 23S rRNA. This is Ribosomal RNA large subunit methyltransferase F from Vibrio campbellii (strain ATCC BAA-1116).